We begin with the raw amino-acid sequence, 424 residues long: Myb family transcription factor RLI1 (424 aa).

Residues Arg144–Gln165 are disordered. One can recognise an HTH myb-type domain in the interval Ala238–Tyr298. A DNA-binding region (H-T-H motif) is located at residues Pro269–Arg294. Positions Leu342–Glu347 match the LHEQLE motif. Residues Leu342 to Ala391 are a coiled coil.

The protein belongs to the MYB-CC family. Homodimer. Interacts with PHR2 in the nucleus. Interacts with SPX1 and SPX2 in the nucleus; these interactions prevent binding to the promoters of target genes, thus regulating negatively leaf inclination in response to phosphate (Pi) starvation.

The protein localises to the nucleus. Functionally, transcription factor binding to specific DNA sequences of target genes promoters, such as the motif R1BS 5'-NAKATNCN-3' and the motif P1BS 5'-GNATATNC-3' to trigger their expression. Nitrate-induced component involved in modulating phosphate (Pi) response and homeostasis together with PHR2; activates directly the expression of Pi starvation-induced (PSI) genes upon nitrate disponibility, thus triggering the nitrate-induced phosphate response (NIPR) promoting Pi uptake activity. Involved in the shoot architecture; positively regulates leaf inclination by affecting lamina joint cell elongation via the direct promotion of ILI4/BU1 and BC1 genes expression, especially in response to phosphate (Pi) availability. Regulates both brassinolide (BL) biosynthesis and signaling by directly activating BL-biosynthesis and signaling genes. This Oryza sativa subsp. indica (Rice) protein is Myb family transcription factor RLI1.